The chain runs to 189 residues: dCTP deaminase, dUMP-forming (189 aa).

Residues 101-106 (KSSLGR), Asp119, 127-129 (TLE), Gln148, Tyr162, and Gln174 contribute to the dCTP site. Glu129 functions as the Proton donor/acceptor in the catalytic mechanism. Positions 166–189 (AVGSKYQGQRGPTPSRSHLNFIKS) are disordered. The segment covering 171–189 (YQGQRGPTPSRSHLNFIKS) has biased composition (polar residues).

It belongs to the dCTP deaminase family. In terms of assembly, homotrimer.

The catalysed reaction is dCTP + 2 H2O = dUMP + NH4(+) + diphosphate. Its pathway is pyrimidine metabolism; dUMP biosynthesis; dUMP from dCTP: step 1/1. Bifunctional enzyme that catalyzes both the deamination of dCTP to dUTP and the hydrolysis of dUTP to dUMP without releasing the toxic dUTP intermediate. The chain is dCTP deaminase, dUMP-forming from Mycolicibacterium smegmatis (strain ATCC 700084 / mc(2)155) (Mycobacterium smegmatis).